The sequence spans 302 residues: Oxygen-dependent coproporphyrinogen-III oxidase (302 aa).

Ser94 provides a ligand contact to substrate. A divalent metal cation contacts are provided by His98 and His108. The active-site Proton donor is the His108. Position 110 to 112 (110 to 112 (NVR)) interacts with substrate. The a divalent metal cation site is built by His147 and His177. The tract at residues 242–277 (YVEFNLVFDRGTLFGLQSGGRTESILMSMPPVANWR) is important for dimerization. 260–262 (GGR) serves as a coordination point for substrate.

This sequence belongs to the aerobic coproporphyrinogen-III oxidase family. In terms of assembly, homodimer. It depends on a divalent metal cation as a cofactor.

It localises to the cytoplasm. It carries out the reaction coproporphyrinogen III + O2 + 2 H(+) = protoporphyrinogen IX + 2 CO2 + 2 H2O. The protein operates within porphyrin-containing compound metabolism; protoporphyrin-IX biosynthesis; protoporphyrinogen-IX from coproporphyrinogen-III (O2 route): step 1/1. Functionally, involved in the heme biosynthesis. Catalyzes the aerobic oxidative decarboxylation of propionate groups of rings A and B of coproporphyrinogen-III to yield the vinyl groups in protoporphyrinogen-IX. This chain is Oxygen-dependent coproporphyrinogen-III oxidase, found in Ralstonia nicotianae (strain ATCC BAA-1114 / GMI1000) (Ralstonia solanacearum).